Consider the following 313-residue polypeptide: Glutaminase (313 aa).

The substrate site is built by S64, N116, E163, N170, Y194, Y246, and V264.

The protein belongs to the glutaminase family. In terms of assembly, homotetramer.

It catalyses the reaction L-glutamine + H2O = L-glutamate + NH4(+). The sequence is that of Glutaminase from Exiguobacterium sp. (strain ATCC BAA-1283 / AT1b).